Here is a 279-residue protein sequence, read N- to C-terminus: ATP synthase gamma chain (279 aa).

The protein belongs to the ATPase gamma chain family. F-type ATPases have 2 components, CF(1) - the catalytic core - and CF(0) - the membrane proton channel. CF(1) has five subunits: alpha(3), beta(3), gamma(1), delta(1), epsilon(1). CF(0) has three main subunits: a, b and c.

It is found in the cell membrane. In terms of biological role, produces ATP from ADP in the presence of a proton gradient across the membrane. The gamma chain is believed to be important in regulating ATPase activity and the flow of protons through the CF(0) complex. This chain is ATP synthase gamma chain, found in Mycoplasma genitalium (strain ATCC 33530 / DSM 19775 / NCTC 10195 / G37) (Mycoplasmoides genitalium).